A 429-amino-acid polypeptide reads, in one-letter code: Enolase (429 aa).

Gln-163 contacts (2R)-2-phosphoglycerate. The active-site Proton donor is the Glu-205. Positions 242, 285, and 312 each coordinate Mg(2+). Residues Lys-337, Arg-366, Ser-367, and Lys-388 each contribute to the (2R)-2-phosphoglycerate site. Lys-337 functions as the Proton acceptor in the catalytic mechanism.

It belongs to the enolase family. The cofactor is Mg(2+).

The protein localises to the cytoplasm. The protein resides in the secreted. It is found in the cell surface. It catalyses the reaction (2R)-2-phosphoglycerate = phosphoenolpyruvate + H2O. It functions in the pathway carbohydrate degradation; glycolysis; pyruvate from D-glyceraldehyde 3-phosphate: step 4/5. Its function is as follows. Catalyzes the reversible conversion of 2-phosphoglycerate (2-PG) into phosphoenolpyruvate (PEP). It is essential for the degradation of carbohydrates via glycolysis. The chain is Enolase from Aromatoleum aromaticum (strain DSM 19018 / LMG 30748 / EbN1) (Azoarcus sp. (strain EbN1)).